The chain runs to 1092 residues: Probable arabinosyltransferase A (1092 aa).

Transmembrane regions (helical) follow at residues 21–43 (IARLIAVVAGIAGVLLCGLVPLL), 214–233 (AVMVLGLACVIGSIVALALL), 249–271 (GLWTWITDTGVIGGLLIWHIVGA), 324–346 (VWMRLPATAAAIATWLIISRCVL), 353–372 (VAANRVAMLTAGATFLAAWL), 382–399 (PLIAFAVITVWMLVENSI), 404–426 (LWPAAVAIVIAMFSVTLAPQGLI), 517–534 (FAVLVLLLCLFGLIMVLL), 541–563 (GAVSGPLWRLCGSTAIGLLLLIL), 568–590 (WAIQFGAFAGLAGALGGVTAFAF), 602–624 (ALYVTALLFILAWATSGLNGWFY), 639–661 (IAHYPVTTIFLVLAIVGGLLAGW), and 682–704 (ALASTPLLIVATIMVVLELGSMV). Residues 772-798 (PSGVSEHLEPEPVGTNPGTPNSEGPVD) are disordered.

It belongs to the emb family.

It is found in the cell membrane. Functionally, arabinosyl transferase responsible for the polymerization of arabinose into the arabinan of arabinogalactan. The protein is Probable arabinosyltransferase A (embA) of Mycolicibacterium smegmatis (Mycobacterium smegmatis).